The chain runs to 286 residues: Protein HEXIM2 (286 aa).

A compositionally biased stretch (polar residues) spans 1-11 (MMATPNQTACN). The interval 1–195 (MMATPNQTAC…GEFQRKDFSE (195 aa)) is disordered. Position 29 is a phosphoserine (S29). T32 bears the Phosphothreonine mark. S39 is subject to Phosphoserine. T46 carries the post-translational modification Phosphothreonine. 5 positions are modified to phosphoserine: S51, S53, S71, S76, and S81. The span at 68–78 (NSRSPRTQSPG) shows a compositional bias: polar residues. The segment covering 87 to 103 (ARKKHRRRPSKRKRHWR) has biased composition (basic residues). Residues 113-132 (KQQRDERQSQRASRVREEMF) are compositionally biased toward basic and acidic residues. The segment at 140–143 (PYNT) is interaction with P-TEFb. Positions 178-195 (SDGRGRAHGEFQRKDFSE) are enriched in basic and acidic residues. Positions 207–277 (GRSKQELVRD…QENQMWNREG (71 aa)) form a coiled coil. The segment at 226 to 286 (QAEEETRRLQ…GCRCDEEPGT (61 aa)) is interaction with CCNT1, HEXIM1 and HEXIM2.

Belongs to the HEXIM family. Homooligomer and heterooligomer with HEXIM1; probably dimeric. Core component of the 7SK RNP complex, at least composed of 7SK RNA, LARP7, MEPCE, HEXIM1 (or HEXIM2) and P-TEFb (composed of CDK9 and CCNT1/cyclin-T1). Interacts with CCNT2. As to expression, ubiquitously expressed with higher expression in testis. HEXIM1 and HEXIM2 are differentially expressed.

It is found in the nucleus. Functionally, transcriptional regulator which functions as a general RNA polymerase II transcription inhibitor. Core component of the 7SK RNP complex: in cooperation with 7SK snRNA sequesters P-TEFb in a large inactive 7SK snRNP complex preventing RNA polymerase II phosphorylation and subsequent transcriptional elongation. In Homo sapiens (Human), this protein is Protein HEXIM2 (HEXIM2).